The following is a 1405-amino-acid chain: DNA-directed RNA polymerase subunit beta' (1405 aa).

Zn(2+) is bound by residues Cys70, Cys72, Cys85, and Cys88. Residues Asp460, Asp462, and Asp464 each contribute to the Mg(2+) site. Residues Cys815, Cys890, Cys897, and Cys900 each contribute to the Zn(2+) site.

It belongs to the RNA polymerase beta' chain family. In terms of assembly, the RNAP catalytic core consists of 2 alpha, 1 beta, 1 beta' and 1 omega subunit. When a sigma factor is associated with the core the holoenzyme is formed, which can initiate transcription. Mg(2+) serves as cofactor. Zn(2+) is required as a cofactor.

It catalyses the reaction RNA(n) + a ribonucleoside 5'-triphosphate = RNA(n+1) + diphosphate. DNA-dependent RNA polymerase catalyzes the transcription of DNA into RNA using the four ribonucleoside triphosphates as substrates. The sequence is that of DNA-directed RNA polymerase subunit beta' from Xanthomonas campestris pv. campestris (strain 8004).